Here is a 330-residue protein sequence, read N- to C-terminus: Geranylgeranyl diphosphate synthase (330 aa).

Positions 43, 46, and 75 each coordinate isopentenyl diphosphate. The Mg(2+) site is built by Asp82 and Asp86. Arg91 contacts an all-trans-polyprenyl diphosphate. An isopentenyl diphosphate-binding site is contributed by Arg92. The an all-trans-polyprenyl diphosphate site is built by Lys175, Thr176, Gln213, Lys230, and Lys240.

The protein belongs to the FPP/GGPP synthase family. The cofactor is Mg(2+).

The enzyme catalyses isopentenyl diphosphate + (2E,6E)-farnesyl diphosphate = (2E,6E,10E)-geranylgeranyl diphosphate + diphosphate. The protein operates within isoprenoid biosynthesis; geranylgeranyl diphosphate biosynthesis; geranylgeranyl diphosphate from farnesyl diphosphate and isopentenyl diphosphate: step 1/1. In terms of biological role, catalyzes the condensation of isopentenyl pyrophosphate with the allylic pyrophosphates to yield geranylgeranyl diphosphate (GGPP) which is a precursor of the ether-linked lipids. It is able to use dimethylallyl diphosphate (DMAPP), geranyl diphosphate (GPP), and (all-E)-geranyl diphosphate (E-FPP) as an allylic substrate. The chain is Geranylgeranyl diphosphate synthase (gds) from Sulfolobus acidocaldarius (strain ATCC 33909 / DSM 639 / JCM 8929 / NBRC 15157 / NCIMB 11770).